The following is a 455-amino-acid chain: GTPase Der (455 aa).

EngA-type G domains lie at P4 to Q169 and L178 to Q355. Residues G10 to S17, D57 to L61, N120 to E123, G184 to S191, D233 to I237, and N298 to D301 each bind GTP. The KH-like domain maps to R356 to P441.

The protein belongs to the TRAFAC class TrmE-Era-EngA-EngB-Septin-like GTPase superfamily. EngA (Der) GTPase family. Associates with the 50S ribosomal subunit.

In terms of biological role, GTPase that plays an essential role in the late steps of ribosome biogenesis. This is GTPase Der from Gloeobacter violaceus (strain ATCC 29082 / PCC 7421).